A 303-amino-acid chain; its full sequence is Sulfate adenylyltransferase subunit 2 (303 aa).

It belongs to the PAPS reductase family. CysD subfamily. Heterodimer composed of CysD, the smaller subunit, and CysN.

It carries out the reaction sulfate + ATP + H(+) = adenosine 5'-phosphosulfate + diphosphate. Its pathway is sulfur metabolism; hydrogen sulfide biosynthesis; sulfite from sulfate: step 1/3. With CysN forms the ATP sulfurylase (ATPS) that catalyzes the adenylation of sulfate producing adenosine 5'-phosphosulfate (APS) and diphosphate, the first enzymatic step in sulfur assimilation pathway. APS synthesis involves the formation of a high-energy phosphoric-sulfuric acid anhydride bond driven by GTP hydrolysis by CysN coupled to ATP hydrolysis by CysD. This is Sulfate adenylyltransferase subunit 2 from Sulfurovum sp. (strain NBC37-1).